We begin with the raw amino-acid sequence, 361 residues long: 5-formaminoimidazole-4-carboxamide-1-(beta)-D-ribofuranosyl 5'-monophosphate synthetase (361 aa).

Residues histidine 27 and serine 94 each coordinate 5-amino-1-(5-phospho-beta-D-ribosyl)imidazole-4-carboxamide. Residues 116-348 (RRILRWESER…MGQRIAREIK (233 aa)) enclose the ATP-grasp domain. ATP contacts are provided by residues 156–166 (KFPGARGGRGY), 199–202 (EEYV), and glutamate 230. Residue asparagine 258 participates in 5-amino-1-(5-phospho-beta-D-ribosyl)imidazole-4-carboxamide binding. Residues glutamine 297 and glutamate 310 each coordinate Mg(2+).

It belongs to the phosphohexose mutase family. Homohexamer. Dimer of trimers. The cofactor is Mg(2+). Mn(2+) serves as cofactor.

The catalysed reaction is 5-amino-1-(5-phospho-beta-D-ribosyl)imidazole-4-carboxamide + formate + ATP = 5-formamido-1-(5-phospho-D-ribosyl)imidazole-4-carboxamide + ADP + phosphate. The protein operates within purine metabolism; IMP biosynthesis via de novo pathway; 5-formamido-1-(5-phospho-D-ribosyl)imidazole-4-carboxamide from 5-amino-1-(5-phospho-D-ribosyl)imidazole-4-carboxamide (formate route): step 1/1. With respect to regulation, inhibited by ADP. Functionally, catalyzes the ATP- and formate-dependent formylation of 5-aminoimidazole-4-carboxamide-1-beta-d-ribofuranosyl 5'-monophosphate (AICAR) to 5-formaminoimidazole-4-carboxamide-1-beta-d-ribofuranosyl 5'-monophosphate (FAICAR) in the absence of folates. In Methanocaldococcus jannaschii (strain ATCC 43067 / DSM 2661 / JAL-1 / JCM 10045 / NBRC 100440) (Methanococcus jannaschii), this protein is 5-formaminoimidazole-4-carboxamide-1-(beta)-D-ribofuranosyl 5'-monophosphate synthetase.